Consider the following 304-residue polypeptide: Ribosomal RNA large subunit methyltransferase F (304 aa).

It belongs to the methyltransferase superfamily. METTL16/RlmF family.

The protein localises to the cytoplasm. The catalysed reaction is adenosine(1618) in 23S rRNA + S-adenosyl-L-methionine = N(6)-methyladenosine(1618) in 23S rRNA + S-adenosyl-L-homocysteine + H(+). Specifically methylates the adenine in position 1618 of 23S rRNA. The polypeptide is Ribosomal RNA large subunit methyltransferase F (Klebsiella pneumoniae subsp. pneumoniae (strain ATCC 700721 / MGH 78578)).